A 225-amino-acid polypeptide reads, in one-letter code: Phosphatidylserine decarboxylase proenzyme (225 aa).

Serine 188 acts as the Schiff-base intermediate with substrate; via pyruvic acid in catalysis. The residue at position 188 (serine 188) is a Pyruvic acid (Ser); by autocatalysis.

This sequence belongs to the phosphatidylserine decarboxylase family. PSD-A subfamily. Heterodimer of a large membrane-associated beta subunit and a small pyruvoyl-containing alpha subunit. Pyruvate serves as cofactor. In terms of processing, is synthesized initially as an inactive proenzyme. Formation of the active enzyme involves a self-maturation process in which the active site pyruvoyl group is generated from an internal serine residue via an autocatalytic post-translational modification. Two non-identical subunits are generated from the proenzyme in this reaction, and the pyruvate is formed at the N-terminus of the alpha chain, which is derived from the carboxyl end of the proenzyme. The post-translation cleavage follows an unusual pathway, termed non-hydrolytic serinolysis, in which the side chain hydroxyl group of the serine supplies its oxygen atom to form the C-terminus of the beta chain, while the remainder of the serine residue undergoes an oxidative deamination to produce ammonia and the pyruvoyl prosthetic group on the alpha chain.

The protein resides in the cell membrane. It carries out the reaction a 1,2-diacyl-sn-glycero-3-phospho-L-serine + H(+) = a 1,2-diacyl-sn-glycero-3-phosphoethanolamine + CO2. Its pathway is phospholipid metabolism; phosphatidylethanolamine biosynthesis; phosphatidylethanolamine from CDP-diacylglycerol: step 2/2. Functionally, catalyzes the formation of phosphatidylethanolamine (PtdEtn) from phosphatidylserine (PtdSer). The chain is Phosphatidylserine decarboxylase proenzyme from Parvibaculum lavamentivorans (strain DS-1 / DSM 13023 / NCIMB 13966).